The sequence spans 259 residues: Phosphate import ATP-binding protein PstB 1 (259 aa).

Residues 13-254 (IETKDVDLFY…PAEKETEDYI (242 aa)) form the ABC transporter domain. 45–52 (GPSGCGKS) serves as a coordination point for ATP.

It belongs to the ABC transporter superfamily. Phosphate importer (TC 3.A.1.7) family. In terms of assembly, the complex is composed of two ATP-binding proteins (PstB), two transmembrane proteins (PstC and PstA) and a solute-binding protein (PstS).

It is found in the cell membrane. It catalyses the reaction phosphate(out) + ATP + H2O = ADP + 2 phosphate(in) + H(+). Functionally, part of the ABC transporter complex PstSACB involved in phosphate import. Responsible for energy coupling to the transport system. This chain is Phosphate import ATP-binding protein PstB 1, found in Listeria innocua serovar 6a (strain ATCC BAA-680 / CLIP 11262).